A 466-amino-acid polypeptide reads, in one-letter code: ATP-dependent protease ATPase subunit HslU (466 aa).

ATP contacts are provided by residues I18, 60–65 (GVGKTE), D279, E344, and R416.

The protein belongs to the ClpX chaperone family. HslU subfamily. A double ring-shaped homohexamer of HslV is capped on each side by a ring-shaped HslU homohexamer. The assembly of the HslU/HslV complex is dependent on binding of ATP.

The protein localises to the cytoplasm. ATPase subunit of a proteasome-like degradation complex; this subunit has chaperone activity. The binding of ATP and its subsequent hydrolysis by HslU are essential for unfolding of protein substrates subsequently hydrolyzed by HslV. HslU recognizes the N-terminal part of its protein substrates and unfolds these before they are guided to HslV for hydrolysis. The chain is ATP-dependent protease ATPase subunit HslU from Syntrophomonas wolfei subsp. wolfei (strain DSM 2245B / Goettingen).